The sequence spans 712 residues: Polyribonucleotide nucleotidyltransferase (712 aa).

Positions 487 and 493 each coordinate Mg(2+). The KH domain occupies 554 to 613 (PKIITMTINPDKIRDVIGPSGKQINKIIEETGVKIDIEQDGTVFISSINQEMNDKAKKII). Positions 623–691 (GEIYEGKVKR…KQGRVNLSRK (69 aa)) constitute an S1 motif domain.

This sequence belongs to the polyribonucleotide nucleotidyltransferase family. The cofactor is Mg(2+).

It localises to the cytoplasm. The enzyme catalyses RNA(n+1) + phosphate = RNA(n) + a ribonucleoside 5'-diphosphate. Its function is as follows. Involved in mRNA degradation. Catalyzes the phosphorolysis of single-stranded polyribonucleotides processively in the 3'- to 5'-direction. The chain is Polyribonucleotide nucleotidyltransferase from Bacillus cereus (strain G9842).